The sequence spans 264 residues: Thymidylate synthase (264 aa).

R21 serves as a coordination point for dUMP. H51 serves as a coordination point for (6R)-5,10-methylene-5,6,7,8-tetrahydrofolate. 126-127 (RR) serves as a coordination point for dUMP. C146 functions as the Nucleophile in the catalytic mechanism. DUMP contacts are provided by residues 166-169 (RSCD), N177, and 207-209 (HLY). D169 is a (6R)-5,10-methylene-5,6,7,8-tetrahydrofolate binding site. Position 263 (A263) interacts with (6R)-5,10-methylene-5,6,7,8-tetrahydrofolate.

It belongs to the thymidylate synthase family. Bacterial-type ThyA subfamily. In terms of assembly, homodimer.

It localises to the cytoplasm. It catalyses the reaction dUMP + (6R)-5,10-methylene-5,6,7,8-tetrahydrofolate = 7,8-dihydrofolate + dTMP. It functions in the pathway pyrimidine metabolism; dTTP biosynthesis. In terms of biological role, catalyzes the reductive methylation of 2'-deoxyuridine-5'-monophosphate (dUMP) to 2'-deoxythymidine-5'-monophosphate (dTMP) while utilizing 5,10-methylenetetrahydrofolate (mTHF) as the methyl donor and reductant in the reaction, yielding dihydrofolate (DHF) as a by-product. This enzymatic reaction provides an intracellular de novo source of dTMP, an essential precursor for DNA biosynthesis. The protein is Thymidylate synthase of Edwardsiella ictaluri (strain 93-146).